A 71-amino-acid polypeptide reads, in one-letter code: Omega-conotoxin-like CnVIIF (71 aa).

Disulfide bonds link cysteine 46/cysteine 61, cysteine 53/cysteine 65, and cysteine 60/cysteine 70. Cysteine 70 bears the Cysteine amide; in CnVIID mark.

It belongs to the conotoxin M superfamily. As to expression, expressed by the venom duct.

The protein resides in the secreted. In terms of biological role, omega-conotoxins act at presynaptic membranes, they bind and block voltage-gated calcium channels (Cav). The sequence is that of Omega-conotoxin-like CnVIIF from Conus consors (Singed cone).